The following is a 59-amino-acid chain: Phycobilisome degradation protein NblA (59 aa).

This sequence to chloroplast ycf18.

In terms of biological role, involved in phycobilisome (PBS) degradation during nutrient deprivation. May mark the PBS for degradation by covalent association with PBS components or may disrupt the PBS via ionic interactions. This Synechococcus elongatus (strain ATCC 33912 / PCC 7942 / FACHB-805) (Anacystis nidulans R2) protein is Phycobilisome degradation protein NblA.